The chain runs to 347 residues: 2-hydroxyacid dehydrogenase A (347 aa).

NAD(+) is bound by residues 157-158 (RI), Asp-177, 234-236 (TSR), and Asp-260. Arg-236 is an active-site residue. Glu-265 is an active-site residue.

Belongs to the D-isomer specific 2-hydroxyacid dehydrogenase family.

The catalysed reaction is a (2R)-2-hydroxycarboxylate + NADP(+) = a 2-oxocarboxylate + NADPH + H(+). Functionally, 2-hydroxyacid dehydrogenase that is capable to reduce pyruvate, hydroxypyruvate and glyoxylate in a NADPH- or NADH-dependent manner. In contrast to 2-HadhD/morA, does not recognize 4-methyl-2-oxopentanoate (MOA) as a substrate. This Aspergillus oryzae (strain ATCC 42149 / RIB 40) (Yellow koji mold) protein is 2-hydroxyacid dehydrogenase A.